The sequence spans 31 residues: Cyclotide vpub-B (31 aa).

The cyclopeptide (Gly-Asn) cross-link spans 1 to 31; that stretch reads GIIPCGESCVFIPCITSVVGCSCKSKVCYKN. Cystine bridges form between C5/C21, C9/C23, and C14/C28.

The protein belongs to the cyclotide family. Bracelet subfamily. This is a cyclic peptide.

Probably participates in a plant defense mechanism. This chain is Cyclotide vpub-B, found in Viola pubescens (Downy yellow violet).